A 260-amino-acid chain; its full sequence is WUSCHEL-related homeobox 2 (260 aa).

Residues 10–74 (ASSSRWNPTK…NHKARQRQKQ (65 aa)) constitute a DNA-binding region (homeobox; WUS-type).

Belongs to the WUS homeobox family.

It localises to the nucleus. In terms of biological role, probable transcription factor involved in embryonic patterning. Required for apical embryo development after fertilization. Its specific localization to the apical daughter cell of the zygote, while WOX8 is confined to the basal cell, suggests that the asymmetric division of the plant zygote separates determinants of apical and basal cell fates. This Arabidopsis thaliana (Mouse-ear cress) protein is WUSCHEL-related homeobox 2 (WOX2).